A 123-amino-acid chain; its full sequence is UPF0102 protein PputW619_0932 (123 aa).

It belongs to the UPF0102 family.

This is UPF0102 protein PputW619_0932 from Pseudomonas putida (strain W619).